The sequence spans 574 residues: ATP-dependent RNA helicase HAS1 (574 aa).

The span at 31–47 (ATKAKASSASSSSTPAA) shows a compositional bias: low complexity. Residues 31–53 (ATKAKASSASSSSTPAAERQPFS) are disordered. Positions 50-78 (QPFSILDLSEPTRKAIDAMGFKTMTEVQA) match the Q motif motif. Positions 81-257 (IPPLMAGKDV…RISLRPGPLY (177 aa)) constitute a Helicase ATP-binding domain. Position 94–101 (94–101 (AQTGSGKT)) interacts with ATP. The DEAD box motif lies at 204–207 (DEAD). In terms of domain architecture, Helicase C-terminal spans 271-440 (RLEQGYVVCE…NVQGQLEKLI (170 aa)). The Bipartite nuclear localization signal signature appears at 283–299 (RRFLLLFTFLKKNAGKK). Residues 500–574 (LKTSASSSSG…GNKGGKQWSR (75 aa)) form a disordered region. Acidic residues predominate over residues 519 to 528 (VDGEGEDADG). Over residues 530–541 (INPKRQQSDRRA) the composition is skewed to basic and acidic residues.

It belongs to the DEAD box helicase family. DDX18/HAS1 subfamily. As to quaternary structure, associates in the nucleolus with the 60S and pre-60S ribosomal subunits.

Its subcellular location is the nucleus. The protein resides in the nucleolus. It catalyses the reaction ATP + H2O = ADP + phosphate + H(+). Functionally, ATP-dependent RNA helicase involved in 40S ribosomal subunit biogenesis. Required for the processing and cleavage of 35S pre-rRNA at sites A0, A1, and A2, leading to mature 18S rRNA. The chain is ATP-dependent RNA helicase HAS1 (HAS1) from Mycosarcoma maydis (Corn smut fungus).